The chain runs to 588 residues: Putative calcium-binding mitochondrial carrier F55A11.4 (588 aa).

Polar residues predominate over residues Met-1 to Ala-14. Positions Met-1 to Tyr-25 are disordered. 4 consecutive EF-hand domains span residues Glu-73–His-108, Ile-109–Leu-139, Glu-140–Pro-175, and Leu-176–Ser-211. Ca(2+) is bound by residues Asp-86, Asp-88, Asp-90, Thr-92, and Asp-97. Residues Asp-153, Asn-155, Asp-157, and Glu-164 each coordinate Ca(2+). Solcar repeat units lie at residues Gly-246–Leu-332, Ile-342–Thr-428, and Pro-440–Gly-529. A run of 6 helical transmembrane segments spans residues Leu-252 to Phe-269, Gly-307 to Tyr-326, Ser-352 to Met-365, Gly-403 to Tyr-422, Leu-446 to Phe-463, and Gly-504 to Tyr-523.

This sequence belongs to the mitochondrial carrier (TC 2.A.29) family. As to quaternary structure, homodimer (via N-terminus).

Its subcellular location is the mitochondrion inner membrane. In terms of biological role, mitochondrial and calcium-binding carrier that catalyzes the calcium-dependent exchange of cytoplasmic glutamate with mitochondrial aspartate across the mitochondrial inner membrane. This is Putative calcium-binding mitochondrial carrier F55A11.4 from Caenorhabditis elegans.